The sequence spans 108 residues: ATP-dependent Clp protease adapter protein ClpS (108 aa).

It belongs to the ClpS family. As to quaternary structure, binds to the N-terminal domain of the chaperone ClpA.

Functionally, involved in the modulation of the specificity of the ClpAP-mediated ATP-dependent protein degradation. The chain is ATP-dependent Clp protease adapter protein ClpS from Cupriavidus metallidurans (strain ATCC 43123 / DSM 2839 / NBRC 102507 / CH34) (Ralstonia metallidurans).